The chain runs to 431 residues: Gamma-glutamyl phosphate reductase (431 aa).

This sequence belongs to the gamma-glutamyl phosphate reductase family.

The protein localises to the cytoplasm. The catalysed reaction is L-glutamate 5-semialdehyde + phosphate + NADP(+) = L-glutamyl 5-phosphate + NADPH + H(+). It participates in amino-acid biosynthesis; L-proline biosynthesis; L-glutamate 5-semialdehyde from L-glutamate: step 2/2. Catalyzes the NADPH-dependent reduction of L-glutamate 5-phosphate into L-glutamate 5-semialdehyde and phosphate. The product spontaneously undergoes cyclization to form 1-pyrroline-5-carboxylate. The chain is Gamma-glutamyl phosphate reductase from Acaryochloris marina (strain MBIC 11017).